We begin with the raw amino-acid sequence, 354 residues long: 3-isopropylmalate dehydrogenase (354 aa).

Gly76 to Glu87 lines the NAD(+) pocket. Positions 94, 104, 130, and 215 each coordinate substrate. 3 residues coordinate Mg(2+): Asp215, Asp239, and Asp243. NAD(+) is bound at residue Gly273–Asn285.

This sequence belongs to the isocitrate and isopropylmalate dehydrogenases family. LeuB type 1 subfamily. As to quaternary structure, homodimer. Mg(2+) is required as a cofactor. Requires Mn(2+) as cofactor.

Its subcellular location is the cytoplasm. It carries out the reaction (2R,3S)-3-isopropylmalate + NAD(+) = 4-methyl-2-oxopentanoate + CO2 + NADH. It functions in the pathway amino-acid biosynthesis; L-leucine biosynthesis; L-leucine from 3-methyl-2-oxobutanoate: step 3/4. Catalyzes the oxidation of 3-carboxy-2-hydroxy-4-methylpentanoate (3-isopropylmalate) to 3-carboxy-4-methyl-2-oxopentanoate. The product decarboxylates to 4-methyl-2 oxopentanoate. The chain is 3-isopropylmalate dehydrogenase from Bacillus cereus (strain ZK / E33L).